We begin with the raw amino-acid sequence, 170 residues long: TFIIB-type zinc finger protein (170 aa).

The TFIIB-type zinc-finger motif lies at 1-30 (MECPVCGSNEIVWDNKNGEVVCSNCGIIID). Residues cysteine 3, cysteine 6, cysteine 22, and cysteine 25 each coordinate Zn(2+).

This sequence belongs to the TFIIB family. It depends on Zn(2+) as a cofactor.

The sequence is that of TFIIB-type zinc finger protein from Saccharolobus shibatae (strain ATCC 51178 / DSM 5389 / JCM 8931 / NBRC 15437 / B12) (Sulfolobus shibatae).